Here is a 135-residue protein sequence, read N- to C-terminus: MSLIVYFSSRSGNTHRFVERLGVRSSRIPLEASGALQVREPFVLVTPTYGGGSTKGAVPNPVIRFLNDADNRALIRGVIAAGNSNFGEAFCIAGNIISAKCGVPYLYRFELLGTAEDVGNVRNGMEQFWTRQTQA.

This sequence belongs to the NrdI family.

Probably involved in ribonucleotide reductase function. This is Protein NrdI from Brucella abortus (strain S19).